A 99-amino-acid polypeptide reads, in one-letter code: Nucleoid-associated protein LACR_0106 (99 aa).

Belongs to the YbaB/EbfC family. In terms of assembly, homodimer.

The protein resides in the cytoplasm. It is found in the nucleoid. Its function is as follows. Binds to DNA and alters its conformation. May be involved in regulation of gene expression, nucleoid organization and DNA protection. The polypeptide is Nucleoid-associated protein LACR_0106 (Lactococcus lactis subsp. cremoris (strain SK11)).